The sequence spans 1357 residues: DNA-directed RNA polymerase subunit beta (1357 aa).

Belongs to the RNA polymerase beta chain family. The RNAP catalytic core consists of 2 alpha, 1 beta, 1 beta' and 1 omega subunit. When a sigma factor is associated with the core the holoenzyme is formed, which can initiate transcription.

It catalyses the reaction RNA(n) + a ribonucleoside 5'-triphosphate = RNA(n+1) + diphosphate. Its function is as follows. DNA-dependent RNA polymerase catalyzes the transcription of DNA into RNA using the four ribonucleoside triphosphates as substrates. The protein is DNA-directed RNA polymerase subunit beta of Hahella chejuensis (strain KCTC 2396).